We begin with the raw amino-acid sequence, 666 residues long: Calcium/calmodulin-dependent protein kinase type II subunit beta (666 aa).

One can recognise a Protein kinase domain in the interval 14–272; sequence YQLYEDIGKG…AHEALKHPWV (259 aa). Tyr17 carries the phosphotyrosine modification. Residues 20-28 and Lys43 each bind ATP; that span reads IGKGAFSVV. Asp136 serves as the catalytic Proton acceptor. Residues 283–292 form an autoinhibitory domain region; that stretch reads HRQETVECLK. The residue at position 287 (Thr287) is a Phosphothreonine; by autocatalysis. Positions 291–301 are calmodulin-binding; that stretch reads LKKFNARRKLK. Residues Thr306 and Thr307 each carry the phosphothreonine; by autocatalysis modification. The interval 349–534 is disordered; sequence ADGVKPQTNS…IPGPLPTPSR (186 aa). Residues 354–369 are compositionally biased toward polar residues; the sequence is PQTNSTKNSAAATSPK. Phosphoserine is present on residues Ser367, Ser394, and Ser397. Phosphothreonine occurs at positions 400 and 401. Residues 432–447 show a composition bias toward pro residues; the sequence is LPCPSPAPFSPLPAPS. Over residues 479–491 the composition is skewed to low complexity; that stretch reads SPALLGPLSSPSP. Positions 514–531 are enriched in pro residues; the sequence is PVGPPPCPSPTIPGPLPT.

The protein belongs to the protein kinase superfamily. CAMK Ser/Thr protein kinase family. CaMK subfamily. In terms of assembly, CAMK2 is composed of 4 different chains: alpha (CAMK2A), beta (CAMK2B), gamma (CAMK2G), and delta (CAMK2D). The different isoforms assemble into homo- or heteromultimeric holoenzymes composed of 12 subunits with two hexameric rings stacked one on top of the other. Interacts with SYNGAP1 and CAMK2N2. Interacts with MPDZ. Interacts with FOXO3. Interacts (when in a kinase inactive state not associated with calmodulin) with ARC; leading to target ARC to inactive synapses. Interacts with CAMK2N1; this interaction requires CAMK2B activation by Ca(2+). In terms of processing, autophosphorylation of Thr-287 following activation by Ca(2+)/calmodulin. Phosphorylation of Thr-287 locks the kinase into an activated state. As to expression, widely expressed. Expressed in adult and fetal brain. Expression is slightly lower in fetal brain. Expressed in skeletal muscle.

It localises to the cytoplasm. The protein localises to the cytoskeleton. Its subcellular location is the microtubule organizing center. It is found in the centrosome. The protein resides in the sarcoplasmic reticulum membrane. It localises to the synapse. It carries out the reaction L-seryl-[protein] + ATP = O-phospho-L-seryl-[protein] + ADP + H(+). The enzyme catalyses L-threonyl-[protein] + ATP = O-phospho-L-threonyl-[protein] + ADP + H(+). Its activity is regulated as follows. Activated by Ca(2+)/calmodulin. Binding of calmodulin results in conformational change that relieves intrasteric autoinhibition and allows autophosphorylation of Thr-287 which turns the kinase in a constitutively active form and confers to the kinase a Ca(2+)-independent activity. Functionally, calcium/calmodulin-dependent protein kinase that functions autonomously after Ca(2+)/calmodulin-binding and autophosphorylation, and is involved in dendritic spine and synapse formation, neuronal plasticity and regulation of sarcoplasmic reticulum Ca(2+) transport in skeletal muscle. In neurons, plays an essential structural role in the reorganization of the actin cytoskeleton during plasticity by binding and bundling actin filaments in a kinase-independent manner. This structural function is required for correct targeting of CaMK2A, which acts downstream of NMDAR to promote dendritic spine and synapse formation and maintain synaptic plasticity which enables long-term potentiation (LTP) and hippocampus-dependent learning. In developing hippocampal neurons, promotes arborization of the dendritic tree and in mature neurons, promotes dendritic remodeling. Also regulates the migration of developing neurons. Participates in the modulation of skeletal muscle function in response to exercise. In slow-twitch muscles, is involved in regulation of sarcoplasmic reticulum (SR) Ca(2+) transport and in fast-twitch muscle participates in the control of Ca(2+) release from the SR through phosphorylation of triadin, a ryanodine receptor-coupling factor, and phospholamban (PLN/PLB), an endogenous inhibitor of SERCA2A/ATP2A2. In response to interferon-gamma (IFN-gamma) stimulation, catalyzes phosphorylation of STAT1, stimulating the JAK-STAT signaling pathway. Phosphorylates reticulophagy regulator RETREG1 at 'Ser-151' under endoplasmic reticulum stress conditions which enhances RETREG1 oligomerization and its membrane scission and reticulophagy activity. The sequence is that of Calcium/calmodulin-dependent protein kinase type II subunit beta (CAMK2B) from Homo sapiens (Human).